A 194-amino-acid polypeptide reads, in one-letter code: Imidazoleglycerol-phosphate dehydratase (194 aa).

Belongs to the imidazoleglycerol-phosphate dehydratase family.

The protein localises to the cytoplasm. It carries out the reaction D-erythro-1-(imidazol-4-yl)glycerol 3-phosphate = 3-(imidazol-4-yl)-2-oxopropyl phosphate + H2O. The protein operates within amino-acid biosynthesis; L-histidine biosynthesis; L-histidine from 5-phospho-alpha-D-ribose 1-diphosphate: step 6/9. The sequence is that of Imidazoleglycerol-phosphate dehydratase from Bacillus cereus (strain ZK / E33L).